The chain runs to 397 residues: Phosphoglycerate kinase (397 aa).

Substrate contacts are provided by residues 25–27 (DLN), arginine 41, 64–67 (HLGR), arginine 118, and arginine 151. ATP contacts are provided by residues lysine 202, glutamate 324, and 350–353 (GGDT).

Belongs to the phosphoglycerate kinase family. Monomer.

It is found in the cytoplasm. The enzyme catalyses (2R)-3-phosphoglycerate + ATP = (2R)-3-phospho-glyceroyl phosphate + ADP. It participates in carbohydrate degradation; glycolysis; pyruvate from D-glyceraldehyde 3-phosphate: step 2/5. This chain is Phosphoglycerate kinase, found in Leptothrix cholodnii (strain ATCC 51168 / LMG 8142 / SP-6) (Leptothrix discophora (strain SP-6)).